A 227-amino-acid chain; its full sequence is UPF0758 protein lpg2489 (227 aa).

One can recognise an MPN domain in the interval 102–225 (RLSNTQQTYA…YSIFAENKWV (124 aa)). Zn(2+) is bound by residues His173, His175, and Asp186. Residues 173-186 (HNHPSGLSDASQQD) carry the JAMM motif motif.

Belongs to the UPF0758 family.

The sequence is that of UPF0758 protein lpg2489 from Legionella pneumophila subsp. pneumophila (strain Philadelphia 1 / ATCC 33152 / DSM 7513).